The primary structure comprises 540 residues: Hydroxylamine reductase (540 aa).

[4Fe-4S] cluster is bound by residues cysteine 3, cysteine 6, cysteine 15, and cysteine 21. Positions 236, 260, 304, 395, 423, 448, 483, and 485 each coordinate hybrid [4Fe-2O-2S] cluster. Cysteine 395 carries the post-translational modification Cysteine persulfide.

It belongs to the HCP family. Requires [4Fe-4S] cluster as cofactor. Hybrid [4Fe-2O-2S] cluster serves as cofactor.

The protein localises to the cytoplasm. The catalysed reaction is A + NH4(+) + H2O = hydroxylamine + AH2 + H(+). Its function is as follows. Catalyzes the reduction of hydroxylamine to form NH(3) and H(2)O. This chain is Hydroxylamine reductase, found in Methanosarcina mazei (strain ATCC BAA-159 / DSM 3647 / Goe1 / Go1 / JCM 11833 / OCM 88) (Methanosarcina frisia).